Consider the following 41-residue polypeptide: Fibrinogen beta chain (41 aa).

The segment at 1 to 41 (ADDYDDEVLPDARGHRPIDRKREELPSLRPAPPPISGGGYR) is disordered. The residue at position 4 (Tyr-4) is a Sulfotyrosine. Basic and acidic residues predominate over residues 10–26 (PDARGHRPIDRKREELP). The beta-chain polymerization, binding distal domain of another fibrin stretch occupies residues 14-16 (GHR).

In terms of assembly, heterohexamer; disulfide linked. Contains 2 sets of 3 non-identical chains (alpha, beta and gamma). The 2 heterotrimers are in head to head conformation with the N-termini in a small central domain. Post-translationally, conversion of fibrinogen to fibrin is triggered by thrombin, which cleaves fibrinopeptides A and B from alpha and beta chains, and thus exposes the N-terminal polymerization sites responsible for the formation of the soft clot.

The protein resides in the secreted. Cleaved by the protease thrombin to yield monomers which, together with fibrinogen alpha (FGA) and fibrinogen gamma (FGG), polymerize to form an insoluble fibrin matrix. Fibrin has a major function in hemostasis as one of the primary components of blood clots. In addition, functions during the early stages of wound repair to stabilize the lesion and guide cell migration during re-epithelialization. Was originally thought to be essential for platelet aggregation, based on in vitro studies using anticoagulated blood. However subsequent studies have shown that it is not absolutely required for thrombus formation in vivo. Enhances expression of SELP in activated platelets. Maternal fibrinogen is essential for successful pregnancy. Fibrin deposition is also associated with infection, where it protects against IFNG-mediated hemorrhage. May also facilitate the antibacterial immune response via both innate and T-cell mediated pathways. The protein is Fibrinogen beta chain (FGB) of Oryctolagus cuniculus (Rabbit).